A 493-amino-acid chain; its full sequence is MHTLVFLSTRQVLQCQPAACQALPLLPRELFPLLFKVAFMDKKTLVLRELVHTWPFPLLSFQQLLQECAHCSRALLQERLSTESMQAVILGLTARIHTQETEAGTQPLCRKHALRVLDMTGLLDDGVEQDPETMSMWDCTAAVARTCIAQQQGGTAEPGLSPVPVEIRVDLRVNRASYTFLREALQSSVASPLRLCCRDLRAEDLPMRNTVALLQLLDAGCLRRIDLRFNNLGLRGLSVIIPHVARFQHLASLRLHYVHGDSRQPSVDGEDNFRYFLAQMGRFMCLRELSMGSSLLSGRLDQLLSTLQRPLESLELAFCALLPEDLRFLAQSSHAAHLKKLDLSGNDLSGNQLTPFQGLLQAVATTLLHLELTECQLADAQLLATLPTLTRCASLRYLGLYGNPLSMAGLKELLRDSVVQAELRTVVHPFPVDCYEGLPWPPPASVLLEASINEEKFARVEAELHQLLLASGRAHVLWTTDIYGRLAADYFSL.

An LRR 1; degenerate repeat occupies 111-146 (KHALRVLDMTGLLDDGVEQDPETMSMWDCTAAVART). The stretch at 194 to 218 (RLCCRDLRAEDLPMRNTVALLQLLD) is one LRR 2; degenerate repeat. An LRR 3; degenerate repeat occupies 219–246 (AGCLRRIDLRFNNLGLRGLSVIIPHVAR). One copy of the LRR 4; degenerate repeat lies at 247 to 282 (FQHLASLRLHYVHGDSRQPSVDGEDNFRYFLAQMGR). LRR repeat units lie at residues 283–307 (FMCL…LSTL), 308–339 (QRPL…AHLK), 340–360 (KLDL…QGLL), 364–391 (ATTL…TLTR), and 392–416 (CASL…LLRD).

This sequence belongs to the PRAME family. LRRC14 subfamily. As to quaternary structure, interacts with IKBKB; disrupts IKBKB-IKBKG interaction preventing I-kappa-B-kinase (IKK) core complex formation and leading to a decrease of IKBKB phosphorylation and NF-kappaB activation. Interacts with CHUK.

The protein localises to the cytoplasm. Negatively regulates Toll-like receptor-mediated NF-kappa-B signaling by disrupting IKK core complex formation through interaction with IKBKB. This is Leucine-rich repeat-containing protein 14 from Mus musculus (Mouse).